A 239-amino-acid polypeptide reads, in one-letter code: uncharacterized protein (239 aa).

Positions Arg193 to Ser214 are disordered.

The protein localises to the nucleus. This is an uncharacterized protein from Schizosaccharomyces pombe (strain 972 / ATCC 24843) (Fission yeast).